Consider the following 982-residue polypeptide: Zinc finger and BTB domain-containing protein 4 (982 aa).

The region spanning 30-131 (CDVTLIAGDT…IYSARLALPG (102 aa)) is the BTB domain. A Glycyl lysine isopeptide (Lys-Gly) (interchain with G-Cter in SUMO2) cross-link involves residue Lys40. The segment at 71-103 (TGGSAPSPATTTAASSSSSSPPPASPHSSSPPR) is disordered. Positions 74-89 (SAPSPATTTAASSSSS) are enriched in low complexity. The segment at 165–324 (VPPAPTSMVT…CRYCEKVFAL (160 aa)) is interaction with CBFA2T3. The C2H2-type 1; atypical zinc finger occupies 210 to 232 (FPCPRCGKSFIHPKRLQTHEAQC). The interval 234 to 255 (RGSNTRGSAGLGPGVSGSGGPA) is disordered. The span at 242 to 255 (AGLGPGVSGSGGPA) shows a compositional bias: gly residues. 3 consecutive C2H2-type zinc fingers follow at residues 285 to 307 (YVCA…SNVH), 313 to 335 (YPCR…EVWH), and 341 to 364 (YQCI…RAFH). Ser367 is subject to Phosphoserine. The segment at 404-578 (KTYSQGAPEA…QLQAPPPLCQ (175 aa)) is disordered. A compositionally biased stretch (pro residues) spans 430-446 (SPQPLPPPAPEPGPPPS). Residues 467–477 (AAGGGPAGTGG) show a composition bias toward gly residues. Low complexity-rich tracts occupy residues 478-488 (SQAASVITYTT) and 507-529 (ATPT…ATAT). Lys548 participates in a covalent cross-link: Glycyl lysine isopeptide (Lys-Gly) (interchain with G-Cter in SUMO2). Residues 552–565 (GLSGSGGSPTGTGR) show a composition bias toward gly residues. Residue Lys590 forms a Glycyl lysine isopeptide (Lys-Gly) (interchain with G-Cter in SUMO2) linkage. Basic and acidic residues predominate over residues 591 to 600 (RRISETDLRP). Disordered stretches follow at residues 591–700 (RRIS…ERRH), 715–738 (LRKH…SSTR), 759–839 (QRHA…GGGS), and 854–880 (GGSR…GDRM). A compositionally biased stretch (acidic residues) spans 604–627 (SGEEVEESEEEEEEEEEEDQEEQE). Residues 628–637 (ESKAGGEDQL) show a composition bias toward basic and acidic residues. 2 consecutive C2H2-type zinc fingers follow at residues 700–722 (HRCG…QEAH) and 739–761 (FTCP…GQRH). 2 positions are modified to phosphothreonine; by HIPK2: Thr769 and Thr771. The span at 799–820 (SSSSGEAGSGSAAAAEASESAS) shows a compositional bias: low complexity. Thr953 is subject to Phosphothreonine; by HIPK2.

As to quaternary structure, interacts with HIPK2. Interacts with CBFA2T3. Interacts with ZBTB38. Post-translationally, phosphorylated by HIPK2. This phosphorylation reduces stability and triggers ZBTB4 protein degradation in response to DNA damage. Expressed in adult and aged myogenic satellite cells.

It is found in the nucleus. Its subcellular location is the chromosome. Its function is as follows. Transcriptional repressor with bimodal DNA-binding specificity. Represses transcription in a methyl-CpG-dependent manner. Binds with a higher affinity to methylated CpG dinucleotides in the consensus sequence 5'-CGCG-3' but can also bind to the non-methylated consensus sequence 5'-CTGCNA-3' also known as the consensus kaiso binding site (KBS). Can also bind specifically to a single methyl-CpG pair and can bind hemimethylated DNA but with a lower affinity compared to methylated DNA. Plays a role in postnatal myogenesis, may be involved in the regulation of satellite cells self-renewal. This chain is Zinc finger and BTB domain-containing protein 4 (Zbtb4), found in Mus musculus (Mouse).